The following is a 342-amino-acid chain: S-adenosylmethionine:tRNA ribosyltransferase-isomerase (342 aa).

It belongs to the QueA family. In terms of assembly, monomer.

It localises to the cytoplasm. It catalyses the reaction 7-aminomethyl-7-carbaguanosine(34) in tRNA + S-adenosyl-L-methionine = epoxyqueuosine(34) in tRNA + adenine + L-methionine + 2 H(+). It functions in the pathway tRNA modification; tRNA-queuosine biosynthesis. Functionally, transfers and isomerizes the ribose moiety from AdoMet to the 7-aminomethyl group of 7-deazaguanine (preQ1-tRNA) to give epoxyqueuosine (oQ-tRNA). In Streptococcus sanguinis (strain SK36), this protein is S-adenosylmethionine:tRNA ribosyltransferase-isomerase.